Here is a 412-residue protein sequence, read N- to C-terminus: Hyaluronidase-3 (412 aa).

An N-terminal signal peptide occupies residues 1–22 (MIMHLGLMMVVGLTLCLMHGQA). 5 cysteine pairs are disulfide-bonded: Cys42–Cys332, Cys206–Cys221, Cys357–Cys368, Cys362–Cys396, and Cys398–Cys407. Asn69 carries an N-linked (GlcNAc...) asparagine glycan. Glu129 serves as the catalytic Proton donor. A glycan (N-linked (GlcNAc...) asparagine) is linked at Asn216. In terms of domain architecture, EGF-like spans 353–408 (AAMACSHQRCHGHGRCARKDPGQMEAFLHLQPDDSLGAWNSFRCHCYSGWAGPTCL).

The protein belongs to the glycosyl hydrolase 56 family. N-glycosylated. Expressed in testis, epididymal tissue, epididymal luminal fluid (ELF), acrosome-intact (AI) sperm and caput (CAP), corpus (COR) and caudal (CAU) sperm. Higher expression in sperm than testis (at protein level). Liver, kidney, skin, brain, stomach and testis. Expressed mainly in granulosa cells of the ovaries. Expressed in small and large antral follicles. Not present in theca or stroma cells. Expressed in testis and liver. Expressed in testis and CAP, COR, and CAU epididymis tissue.

Its subcellular location is the secreted. The protein resides in the cell membrane. It localises to the cytoplasmic vesicle. It is found in the secretory vesicle. The protein localises to the acrosome. Its subcellular location is the endoplasmic reticulum. The protein resides in the early endosome. It carries out the reaction Random hydrolysis of (1-&gt;4)-linkages between N-acetyl-beta-D-glucosamine and D-glucuronate residues in hyaluronate.. Functionally, facilitates sperm penetration into the layer of cumulus cells surrounding the egg by digesting hyaluronic acid. Involved in induction of the acrosome reaction in the sperm. Involved in follicular atresia, the breakdown of immature ovarian follicles that are not selected to ovulate. Induces ovarian granulosa cell apoptosis, possibly via apoptotic signaling pathway involving CASP8 and CASP3 activation, and poly(ADP-ribose) polymerase (PARP) cleavage. Has no hyaluronidase activity in embryonic fibroblasts in vitro. Has no hyaluronidase activity in granulosa cells in vitro. The polypeptide is Hyaluronidase-3 (Hyal3) (Mus musculus (Mouse)).